The following is a 172-amino-acid chain: Small ribosomal subunit protein uS5 (172 aa).

An S5 DRBM domain is found at 17–80; it reads LREKMISVNR…DEARRKMVKV (64 aa).

The protein belongs to the universal ribosomal protein uS5 family. As to quaternary structure, part of the 30S ribosomal subunit. Contacts proteins S4 and S8.

Functionally, with S4 and S12 plays an important role in translational accuracy. Located at the back of the 30S subunit body where it stabilizes the conformation of the head with respect to the body. The chain is Small ribosomal subunit protein uS5 from Cupriavidus taiwanensis (strain DSM 17343 / BCRC 17206 / CCUG 44338 / CIP 107171 / LMG 19424 / R1) (Ralstonia taiwanensis (strain LMG 19424)).